Consider the following 296-residue polypeptide: Protoheme IX farnesyltransferase (296 aa).

9 helical membrane-spanning segments follow: residues 9–29, 36–56, 75–95, 99–119, 133–153, 163–183, 209–229, 234–254, and 265–285; these read VTKPGIIFGNLISVIGGFLLA, YPLFLSTLLGVSLVVASGCVF, VLVKGLIDPKVSLIYASVLGI, LLLYVAANALAMMLAVIGFVI, VYGTLIGSLSGAAPPVIGYCA, LILLLIFSLWQMPHSYAIAIF, ITLYILAFMVATLMLTLSGYA, LVVAAAVSVWWLGMALRGYKA, and FVFSIIAITSLSVMMSVDFNV.

The protein belongs to the UbiA prenyltransferase family. Protoheme IX farnesyltransferase subfamily.

The protein localises to the cell inner membrane. It carries out the reaction heme b + (2E,6E)-farnesyl diphosphate + H2O = Fe(II)-heme o + diphosphate. It participates in porphyrin-containing compound metabolism; heme O biosynthesis; heme O from protoheme: step 1/1. In terms of biological role, converts heme B (protoheme IX) to heme O by substitution of the vinyl group on carbon 2 of heme B porphyrin ring with a hydroxyethyl farnesyl side group. This is Protoheme IX farnesyltransferase from Yersinia pestis bv. Antiqua (strain Antiqua).